Consider the following 146-residue polypeptide: Large ribosomal subunit protein uL15 (146 aa).

Basic and acidic residues predominate over residues 1-13 (MKLHELKPAEGSR). The tract at residues 1-56 (MKLHELKPAEGSRKVRNRVGRGAATGNGKTSGRGQKGQKARSGGSVRPGFEGGQLP) is disordered. Residues 23–35 (AATGNGKTSGRGQ) are compositionally biased toward gly residues.

This sequence belongs to the universal ribosomal protein uL15 family. As to quaternary structure, part of the 50S ribosomal subunit.

Its function is as follows. Binds to the 23S rRNA. The chain is Large ribosomal subunit protein uL15 from Staphylococcus saprophyticus subsp. saprophyticus (strain ATCC 15305 / DSM 20229 / NCIMB 8711 / NCTC 7292 / S-41).